A 308-amino-acid chain; its full sequence is Isoaspartyl peptidase/L-asparaginase (308 aa).

At M1 the chain carries N-acetylmethionine. The Nucleophile role is filled by T168. Substrate contacts are provided by residues 196–199 (RVGD) and 219–222 (TGHG).

The protein belongs to the Ntn-hydrolase family. Heterodimer of an alpha and beta chain produced by autocleavage. This heterodimer may then dimerize in turn, giving rise to a heterotetramer. In terms of processing, cleaved into an alpha and beta chain by autocatalysis; this activates the enzyme. The N-terminal residue of the beta subunit is responsible for the nucleophile hydrolase activity. In terms of tissue distribution, expressed in brain, kidney, testis and tissues of the gastrointestinal tract. Present in sperm (at protein level). Over-expressed in uterine, mammary, prostatic and ovarian carcinoma.

It is found in the cytoplasm. The catalysed reaction is L-asparagine + H2O = L-aspartate + NH4(+). It catalyses the reaction Cleavage of a beta-linked Asp residue from the N-terminus of a polypeptide.. With respect to regulation, glycine accelerates autocleavage into an alpha and beta chain. Functionally, has both L-asparaginase and beta-aspartyl peptidase activity. May be involved in the production of L-aspartate, which can act as an excitatory neurotransmitter in some brain regions. Is highly active with L-Asp beta-methyl ester. Besides, has catalytic activity toward beta-aspartyl dipeptides and their methyl esters, including beta-L-Asp-L-Phe, beta-L-Asp-L-Phe methyl ester (aspartame), beta-L-Asp-L-Ala, beta-L-Asp-L-Leu and beta-L-Asp-L-Lys. Does not have aspartylglucosaminidase activity and is inactive toward GlcNAc-L-Asn. Likewise, has no activity toward glutamine. In Homo sapiens (Human), this protein is Isoaspartyl peptidase/L-asparaginase (ASRGL1).